The sequence spans 514 residues: Cytidine and dCMP deaminase domain-containing protein 1 (514 aa).

Polar residues-rich tracts occupy residues 1–11 (MKEAGQMQNLE) and 18–27 (SVSTQTGSMT). Disordered stretches follow at residues 1 to 27 (MKEA…GSMT) and 55 to 83 (RQKS…TDKR). Basic and acidic residues predominate over residues 59–83 (QKNEEGKHGPLGDNEERTRVSTDKR). The 99-residue stretch at 70–168 (GDNEERTRVS…SLLTEASSSE (99 aa)) folds into the CMP/dCMP-type deaminase 1 domain. Zn(2+) is bound by residues histidine 109, cysteine 134, and cysteine 137. The short motif at 271 to 283 (NLRQNMKDLILLL) is the Nuclear export signal element. The region spanning 317-482 (EIARHCMVQA…LNPSGAYGLE (166 aa)) is the CMP/dCMP-type deaminase 2 domain. Histidine 398 lines the Zn(2+) pocket. Glutamate 400 (proton donor) is an active-site residue. Zn(2+) contacts are provided by cysteine 426 and cysteine 429. The disordered stretch occupies residues 480 to 514 (GLEQNEPERRENGVLRPVPQKEEQHQDKKLRLGIH). A compositionally biased stretch (basic and acidic residues) spans 485–514 (EPERRENGVLRPVPQKEEQHQDKKLRLGIH). The short motif at 488–510 (RRENGVLRPVPQKEEQHQDKKLR) is the Bipartite nuclear localization signal element.

The protein belongs to the cytidine and deoxycytidylate deaminase family. Zn(2+) is required as a cofactor. In terms of tissue distribution, widely expressed. Expressed at high levels in the testis.

It is found in the cytoplasm. Its subcellular location is the nucleus. The catalysed reaction is 2'-deoxycytidine + H2O + H(+) = 2'-deoxyuridine + NH4(+). The enzyme catalyses cytidine + H2O + H(+) = uridine + NH4(+). Functionally, catalyzes the deamination of cytidine and deoxycytidine into uridine and deoxyuridine, respectively. May play an important role in testicular development and spermatogenesis. The polypeptide is Cytidine and dCMP deaminase domain-containing protein 1 (CDADC1) (Homo sapiens (Human)).